The following is a 274-amino-acid chain: Protein STAY-GREEN, chloroplastic (274 aa).

Residues 1-48 (MAAATSTMSLLPPITQQQRWHAADSLVVLASRCHNSRRRRRCRYVVPR) constitute a chloroplast transit peptide.

This sequence belongs to the staygreen family. In terms of assembly, interacts with LHCII complex. In terms of tissue distribution, expressed in leaves, roots and developing seeds.

It is found in the plastid. Its subcellular location is the chloroplast membrane. It localises to the chloroplast stroma. In terms of biological role, involved in the disassembling mechanism of the intact light-harvesting complex of photosystem II (LHCII) in the thylakoid membranes. Required to trigger chlorophyll degradation during natural and dark-induced leaf senescence. This is Protein STAY-GREEN, chloroplastic (SGR) from Oryza sativa subsp. japonica (Rice).